We begin with the raw amino-acid sequence, 172 residues long: Early nodulin-like protein 17 (172 aa).

Positions 1–26 (MARFTVLITAVVLAFLMAAPMPGVTA) are cleaved as a signal peptide. The region spanning 27–127 (KKYTVGENKF…GMKLSVKVEK (101 aa)) is the Phytocyanin domain. N-linked (GlcNAc...) asparagine glycosylation is found at N42, N73, N88, and N101. A disulfide bridge links C80 with C115. A lipid anchor (GPI-anchor amidated glycine) is attached at G141. Positions 142 to 172 (SVSMVTGLAQFMIPVSLFAFPAMWDVISRMW) are cleaved as a propeptide — removed in mature form.

The protein belongs to the early nodulin-like (ENODL) family.

Its subcellular location is the cell membrane. May act as a carbohydrate transporter. This is Early nodulin-like protein 17 from Arabidopsis thaliana (Mouse-ear cress).